We begin with the raw amino-acid sequence, 149 residues long: MSATRANKDIFTLFDKKGQGAIAKDSLGDYLRAIGYNPTNQLVQDIINADSSLRDASSLTLDQITGLIEVNEKELDATTKAKTEDFVKAFQVFDKESTGKVSVGDLRYMLTGLGEKLTDAEVDELLKGVEVDSNGEIDYKKFIEDVLRQ.

EF-hand domains are found at residues 2–37 (SATR…IGYN), 81–116 (AKTE…LGEK), and 117–149 (LTDA…VLRQ). Ca(2+) is bound by residues aspartate 15, aspartate 94, threonine 98, lysine 100, and aspartate 105. A Glycyl lysine isopeptide (Lys-Gly) (interchain with G-Cter in ubiquitin) cross-link involves residue lysine 116. Ca(2+) is bound by residues aspartate 123, lysine 127, and aspartate 132.

Interacts with MYO1, MYO2 and IQG1 by binding to their IQ domains. Interacts with SEC4.

It is found in the bud neck. The protein localises to the bud tip. Functionally, essential light chain for the class II conventional myosin MYO1. Also acts as light chain for the class V unconventional myosin MYO2 and for IQG1. Involved in the assembly of the contractile actomyosin ring at the bud neck during cytokinesis by recruiting IQG1 to the bud neck. Also required for chitin and MYO2-dependent secretory vesicle deposition to the center of the bud neck for septum formation. May stabilize MYO2 by binding to its IQ domains. Its major function is probably not to regulate MYO1 activity, but rather to coordinate actin ring formation and targeted membrane deposition during cytokinesis via its interactions with MYO1, IQG1 and MYO2. The polypeptide is Myosin light chain 1 (MLC1) (Saccharomyces cerevisiae (strain ATCC 204508 / S288c) (Baker's yeast)).